A 327-amino-acid chain; its full sequence is Ribosomal RNA small subunit methyltransferase H (327 aa).

S-adenosyl-L-methionine contacts are provided by residues 42–44 (GGH), D61, L95, D109, and Q116.

It belongs to the methyltransferase superfamily. RsmH family.

The protein localises to the cytoplasm. The enzyme catalyses cytidine(1402) in 16S rRNA + S-adenosyl-L-methionine = N(4)-methylcytidine(1402) in 16S rRNA + S-adenosyl-L-homocysteine + H(+). Specifically methylates the N4 position of cytidine in position 1402 (C1402) of 16S rRNA. This Desulfovibrio desulfuricans (strain ATCC 27774 / DSM 6949 / MB) protein is Ribosomal RNA small subunit methyltransferase H.